We begin with the raw amino-acid sequence, 556 residues long: Potassium-transporting ATPase potassium-binding subunit (556 aa).

A run of 10 helical transmembrane segments spans residues 6–26 (AGLIFLAVLVAALVAVHVPLG), 65–85 (GVLAFSSVSIIFLFVLQLVQG), 133–153 (GLAVQNFVSAAVGMAVAVALV), 176–196 (LRILLPISIVGAVLLVAGGAI), 249–269 (PTAWTNWLEVFLILVIGFSLP), 283–303 (YAIASVMASLYLLSTGFMLWF), 378–398 (GLYGMLVLAVITVFVAGLMVG), 419–439 (YFLVTPLIVLTGTAIAMALPG), 483–503 (ALGLAMAFGRFLPIVLVLALA), and 526–546 (FVGMVAGVTLIVVALTFLPML).

This sequence belongs to the KdpA family. The system is composed of three essential subunits: KdpA, KdpB and KdpC.

It is found in the cell membrane. Its function is as follows. Part of the high-affinity ATP-driven potassium transport (or Kdp) system, which catalyzes the hydrolysis of ATP coupled with the electrogenic transport of potassium into the cytoplasm. This subunit binds the extracellular potassium ions and delivers the ions to the membrane domain of KdpB through an intramembrane tunnel. This chain is Potassium-transporting ATPase potassium-binding subunit, found in Mycolicibacterium paratuberculosis (strain ATCC BAA-968 / K-10) (Mycobacterium paratuberculosis).